Consider the following 300-residue polypeptide: E3 ubiquitin-protein ligase RNF212B (300 aa).

The RING-type zinc finger occupies 6–40; that stretch reads CNQCFRKDGAHFFVTSCGHIFCKKCVTLEKCAVCG. Residues 88–124 are a coiled coil; the sequence is LIAFYKHRITKLETAMQETQQALVSQDKELSVLRKEN. Disordered stretches follow at residues 141 to 251 and 280 to 300; these read YQGS…HTRV and PYQQQRQMGLPSGREAWTTSR. Polar residues predominate over residues 155–169; the sequence is TSPSQSVTPRPSFQH. Residues 170 to 183 are compositionally biased toward low complexity; that stretch reads SSQVVSRSSSVESV. Residues 191-200 show a composition bias toward gly residues; the sequence is GSLGQGGRGL. The span at 211–234 shows a compositional bias: polar residues; it reads NETPSPASTHSLSYRPSSASSGQG.

As to quaternary structure, homodimer. Post-translationally, autoubiquitinated.

It is found in the chromosome. The enzyme catalyses S-ubiquitinyl-[E2 ubiquitin-conjugating enzyme]-L-cysteine + [acceptor protein]-L-lysine = [E2 ubiquitin-conjugating enzyme]-L-cysteine + N(6)-ubiquitinyl-[acceptor protein]-L-lysine.. It functions in the pathway protein modification; protein ubiquitination. Its function is as follows. Ubiquitin E3 ligase that acts as a crucial factor for crossing-over (CO) formation during meiosis. Essential for normal prophase I progression and for ensuring appropriate CO designation in meiosis. Recruits key components of the cross-over machinery either directly ou indirectly, leading to the activation of the MutL-gamma complex. The function of RNF212B in CO designation is dependent on its catalytic activity. In Pongo abelii (Sumatran orangutan), this protein is E3 ubiquitin-protein ligase RNF212B (RNF212B).